The sequence spans 79 residues: Cell division protein ZapB (79 aa).

Positions 4-78 form a coiled coil; the sequence is EVFEKLEAKV…LRALLGKMEE (75 aa).

The protein belongs to the ZapB family. In terms of assembly, homodimer. The ends of the coiled-coil dimer bind to each other, forming polymers. Interacts with FtsZ.

Its subcellular location is the cytoplasm. In terms of biological role, non-essential, abundant cell division factor that is required for proper Z-ring formation. It is recruited early to the divisome by direct interaction with FtsZ, stimulating Z-ring assembly and thereby promoting cell division earlier in the cell cycle. Its recruitment to the Z-ring requires functional FtsA or ZipA. The protein is Cell division protein ZapB of Erwinia tasmaniensis (strain DSM 17950 / CFBP 7177 / CIP 109463 / NCPPB 4357 / Et1/99).